Here is a 195-residue protein sequence, read N- to C-terminus: Endoribonuclease YbeY (195 aa).

Zn(2+) contacts are provided by H153, H157, and H163.

The protein belongs to the endoribonuclease YbeY family. It depends on Zn(2+) as a cofactor.

Its subcellular location is the cytoplasm. Functionally, single strand-specific metallo-endoribonuclease involved in late-stage 70S ribosome quality control and in maturation of the 3' terminus of the 16S rRNA. The protein is Endoribonuclease YbeY of Prochlorococcus marinus (strain SARG / CCMP1375 / SS120).